A 334-amino-acid polypeptide reads, in one-letter code: Catabolite repressor/activator (334 aa).

The 58-residue stretch at 1–58 (MKLDEIARLAGVSRTTASYVINGKAKQYRVSDKTVEKVMAVVREHNYHPNAVAAGLRA) folds into the HTH lacI-type domain. Positions 3 to 22 (LDEIARLAGVSRTTASYVIN) form a DNA-binding region, H-T-H motif.

In terms of assembly, homotetramer.

In terms of biological role, global transcriptional regulator, which plays an important role in the regulation of carbon metabolism. This chain is Catabolite repressor/activator (cra), found in Escherichia coli O157:H7.